Here is a 480-residue protein sequence, read N- to C-terminus: MSDFLNKRFWKYRGKRIRPYMRNNVKLAGAIIFVPVFLLSMFLFWREQLIHFDLSQVIKNFEWNVPLIIKSVLCSVLIAVGSIVASYFLLFDSYKKILHRQKIAKMIFSNKFYEKENVKVRKIFSNETDSKEKITYFPRMYYQVKNNHIYIRIAMDMSRFQNRFLDLGKDLENGLFCDLVDKQMEEGFVCFKLLYDVKKNRISIDDAVAENGVLPLMKHISWQFDKLPHMLIAGGTGGGKTYFMLTIIKACVGLGADVRILDPKNADLADLEEVLPKKVYSQKNGILMCLRKSVDGMMERMDEMKQMSNYKTGENYAYLGLKPVFIFFDEYVAFMDLLDMKERNEALSYMKQLVMLGRQAGYFLVLGAQRPDAKYLADGIRDQFSFRVSLGLMSDTGYGMMFGDVEKAYVNKKETGRGYANVGTGSVLEFYSPIVPKGYDFMSSIKNALVGVEGAQATAVASGSVSDQTASGEGVSEANG.

Transmembrane regions (helical) follow at residues 25–45 and 71–91; these read VKLA…FLFW and SVLC…FLLF. Residues 217–399 enclose the FtsK domain; it reads MKHISWQFDK…LGLMSDTGYG (183 aa). 234 to 241 contacts ATP; that stretch reads GGTGGGKT.

It localises to the cell membrane. The protein is Ftsk domain-containing protein YdcQ (ydcQ) of Bacillus subtilis (strain 168).